A 233-amino-acid chain; its full sequence is Large ribosomal subunit protein uL1 (233 aa).

Belongs to the universal ribosomal protein uL1 family. Part of the 50S ribosomal subunit.

Binds directly to 23S rRNA. The L1 stalk is quite mobile in the ribosome, and is involved in E site tRNA release. Its function is as follows. Protein L1 is also a translational repressor protein, it controls the translation of the L11 operon by binding to its mRNA. The protein is Large ribosomal subunit protein uL1 of Geobacillus kaustophilus (strain HTA426).